Here is a 540-residue protein sequence, read N- to C-terminus: Phosphoenolpyruvate carboxykinase (ATP) (540 aa).

R65 contributes to the substrate binding site. N6-acetyllysine is present on K87. Residues Y207 and K213 each contribute to the substrate site. ATP-binding positions include K213, H232, and 248–256 (GLSGTGKTT). K213 and H232 together coordinate Mn(2+). D269 serves as a coordination point for Mn(2+). ATP-binding positions include E297, R333, 449–450 (RI), and T455. Residue R333 participates in substrate binding. The residue at position 523 (K523) is an N6-acetyllysine.

Belongs to the phosphoenolpyruvate carboxykinase (ATP) family. Monomer. Requires Mn(2+) as cofactor.

It is found in the cytoplasm. It carries out the reaction oxaloacetate + ATP = phosphoenolpyruvate + ADP + CO2. It functions in the pathway carbohydrate biosynthesis; gluconeogenesis. Its function is as follows. Involved in the gluconeogenesis. Catalyzes the conversion of oxaloacetate (OAA) to phosphoenolpyruvate (PEP) through direct phosphoryl transfer between the nucleoside triphosphate and OAA. The sequence is that of Phosphoenolpyruvate carboxykinase (ATP) from Shigella dysenteriae serotype 1 (strain Sd197).